Here is a 290-residue protein sequence, read N- to C-terminus: Light-independent protochlorophyllide reductase iron-sulfur ATP-binding protein (290 aa).

Residues 10–15 (GIGKST) and Lys-39 contribute to the ATP site. Residue Ser-14 coordinates Mg(2+). [4Fe-4S] cluster is bound by residues Cys-95 and Cys-129. Residue 180 to 181 (NR) coordinates ATP.

This sequence belongs to the NifH/BchL/ChlL family. In terms of assembly, homodimer. Protochlorophyllide reductase is composed of three subunits; ChlL, ChlN and ChlB. The cofactor is [4Fe-4S] cluster.

Its subcellular location is the plastid. The protein resides in the chloroplast. It carries out the reaction chlorophyllide a + oxidized 2[4Fe-4S]-[ferredoxin] + 2 ADP + 2 phosphate = protochlorophyllide a + reduced 2[4Fe-4S]-[ferredoxin] + 2 ATP + 2 H2O. It participates in porphyrin-containing compound metabolism; chlorophyll biosynthesis (light-independent). Component of the dark-operative protochlorophyllide reductase (DPOR) that uses Mg-ATP and reduced ferredoxin to reduce ring D of protochlorophyllide (Pchlide) to form chlorophyllide a (Chlide). This reaction is light-independent. The L component serves as a unique electron donor to the NB-component of the complex, and binds Mg-ATP. This Zygnema circumcarinatum (Green alga) protein is Light-independent protochlorophyllide reductase iron-sulfur ATP-binding protein.